The chain runs to 477 residues: RNA pseudouridine synthase 4, mitochondrial (477 aa).

Residues 1 to 43 (MAKWRLATATLRRQLQSSSPTISTFKNPTKALSAAAHQSTRSY) constitute a mitochondrion transit peptide. The interval 34–55 (AAAHQSTRSYSTTQTDDSRGKW) is disordered. Polar residues predominate over residues 36–48 (AHQSTRSYSTTQT). Positions 90–175 (TTALRWILRC…AKKESFQCSD (86 aa)) constitute an S4 RNA-binding domain. D236 is a catalytic residue.

The protein belongs to the pseudouridine synthase RluA family.

It localises to the mitochondrion. The enzyme catalyses a uridine in RNA = a pseudouridine in RNA. This Arabidopsis thaliana (Mouse-ear cress) protein is RNA pseudouridine synthase 4, mitochondrial.